The chain runs to 321 residues: Cathepsin O (321 aa).

An N-terminal signal peptide occupies residues 1 to 23 (MDVRALPWLPWLLWLLCRGGGDA). Positions 24 to 107 (DSRAPFTPTW…EVHMSIPNVS (84 aa)) are cleaved as a propeptide — activation peptide. Asparagine 62 and asparagine 105 each carry an N-linked (GlcNAc...) asparagine glycan. 3 disulfide bridges follow: cysteine 129-cysteine 170, cysteine 163-cysteine 204, and cysteine 262-cysteine 310. The active site involves cysteine 132. Active-site residues include histidine 269 and asparagine 289.

This sequence belongs to the peptidase C1 family. Expressed in all tissues examined. High levels seen in the ovary, kidney and placenta while low levels seen in thymus and skeletal muscle.

It is found in the lysosome. The enzyme catalyses The recombinant human enzyme hydrolyzes synthetic endopeptidase substrates including Z-Phe-Arg-NHMec and Z-Arg-Arg-NHMec.. In terms of biological role, proteolytic enzyme possibly involved in normal cellular protein degradation and turnover. This Homo sapiens (Human) protein is Cathepsin O (CTSO).